The sequence spans 128 residues: 3-aminoacrylate deaminase RutC (128 aa).

It belongs to the RutC family.

The enzyme catalyses (Z)-3-aminoacrylate + H2O + H(+) = 3-oxopropanoate + NH4(+). Its function is as follows. Involved in pyrimidine catabolism. Catalyzes the deamination of 3-aminoacrylate to malonic semialdehyde, a reaction that can also occur spontaneously. RutC may facilitate the reaction and modulate the metabolic fitness, rather than catalyzing essential functions. In Serratia proteamaculans (strain 568), this protein is 3-aminoacrylate deaminase RutC.